We begin with the raw amino-acid sequence, 877 residues long: MSQETPASTTEAQIKNKRRISPFWLLPFIALMIASWLIWDSYQDRGNTVTIDFMSADGIVPGRTPVRYQGVEVGTVQDISLSDDLRKIEVKVSIKSDMKDALREETQFWLVTPKASLAGVSGLDALVGGNYIGMMPGKGKEQDHFVALDTQPKYRLDNGDLMIHLQAPDLGSLNSGSLVYFRKIPVGKVYDYAINPNKQGVVIDVLIERRFTDLVKKGSRFWNVSGVDANVSISGAKVKLESLAALVNGAIAFDSPEESKPAEAEDTFGLYEDLAHSQRGVIIKLELPSGAGLTADSTPLMYQGLEVGQLTKLDLNPGGKVTGEMTVDPSVVTLLRENTRIELRNPKLSLSDANLSALLTGKTFELVPGDGEPRKEFVVVPGEKALLHEPDVLTLTLTAPESYGIDAGQPLILHGVQVGQVIDRKLTSKGVTFTVAIEPQHRELVKGDSKFVVNSRVDVKVGLDGVEFLGASASEWINGGIRILPGDKGEMKASYPLYANLEKALENSLSDLPTTTVSLSAETLPDVQAGSVVLYRKFEVGEVITVRPRANAFDIDLHIKPEYRNLLTSNSVFWAEGGAKVQLNGSGLTVQASPLSRALKGAISFDNLSGASASQRKGDKRILYASETAARAVGGQITLHAFDAGKLAVGMPIRYLGIDIGQIQTLDLITARNEVQAKAVLYPEYVQTFARGGTRFSVVTPQISAAGVEHLDTILQPYINVEPGRGNPRRDFELQEATITDSRYLDGLSIIVEAPEAGSLGIGTPVLFRGLEVGTVTGMTLGTLSDRVMIAMRISKRYQHLVRNNSVFWLASGYSLDFGLTGGVVKTGTFNQFIRGGIAFATPPGTPLAPKAQEGKHFLLQESEPKEWREWGTALPK.

Topologically, residues 1 to 19 (MSQETPASTTEAQIKNKRR) are cytoplasmic. Residues 20-40 (ISPFWLLPFIALMIASWLIWD) form a helical membrane-spanning segment. Topologically, residues 41–877 (SYQDRGNTVT…WREWGTALPK (837 aa)) are periplasmic. MCE/MlaD stretches follow at residues 46-149 (GNTV…VALD), 160-272 (DLMI…GLYE), 279-382 (RGVI…VVPG), 391-499 (DVLT…PLYA), 515-625 (TTVS…ILYA), 634-737 (GGQI…LQEA), and 746-862 (DGLS…LLQE).

It belongs to the PqiB family. As to quaternary structure, homohexamer. May interact with LetA in the inner membrane. May also interact with partners in the outer membrane.

The protein localises to the cell inner membrane. In terms of biological role, forms a tunnel that spans the entire periplasmic space. Is probably involved in the transport of lipids between the inner membrane and the outer membrane through the tunnel. Forms a dynamic tunnel sufficiently long to mediate lipid transport directly between the two membranes without the need for a shuttle protein. Binds phospholipids. Lipids bind inside the tunnel. Required for outer membrane homeostasis. Contributes to membrane integrity. The sequence is that of Lipophilic envelope-spanning tunnel protein B from Escherichia coli (strain K12).